A 331-amino-acid polypeptide reads, in one-letter code: MEIVGCRADESAYPFRPAAAMLFHGITGGHIQGIMEEMERRSKSADSRLAKSIQVNSRETRMPSLNPEKPTLCAGCGGKISDRYYLLAVDKQWHLRCLKCCECKLTLESELTCFAKDGSIYCKEDYYRFSVKRCARCHLGISASEMVMRARESVYHLSCFTCTTCNKTLSTGDQFGMKENLVYCRIHFELLVQGDFHQQLNYTELSAKGGGIAALPYFSNGTGTVQKGRPRKRKSPALGVDIMNYSSGCNENETDLDRDQTYPPSQKTKRMRTSFKHHQLRTMKSYFAINHNPDAKDLKQLAQKTGLTKRVLQGEQCSGFNSHTTRRLKIP.

LIM zinc-binding domains are found at residues 71–132 and 133–194; these read TLCA…FSVK and RCAR…LVQG. The segment at 253–275 is disordered; the sequence is ETDLDRDQTYPPSQKTKRMRTSF. Positions 268-327 form a DNA-binding region, homeobox; that stretch reads TKRMRTSFKHHQLRTMKSYFAINHNPDAKDLKQLAQKTGLTKRVLQGEQCSGFNSHTTRR.

It localises to the nucleus. Its function is as follows. May be involved in gonadal development. This Xenopus laevis (African clawed frog) protein is LIM/homeobox protein Lhx9 (lhx9).